The following is a 146-amino-acid chain: MIIGIGSDLIDITRIAKVIERHGERFLDRVFTEAERAKAERRAKKSELVAATYAKRFAAKEACSKALGTGIRQGVWWRDMGVVNLPGGRPTMVLTGGAKTRLDALTPPGMTARIDLSITDEWPLAQAFVVISAIPAAAEQAVHTSS.

Asp-8 and Glu-61 together coordinate Mg(2+).

The protein belongs to the P-Pant transferase superfamily. AcpS family. Mg(2+) serves as cofactor.

The protein resides in the cytoplasm. It carries out the reaction apo-[ACP] + CoA = holo-[ACP] + adenosine 3',5'-bisphosphate + H(+). Functionally, transfers the 4'-phosphopantetheine moiety from coenzyme A to a Ser of acyl-carrier-protein. This is Holo-[acyl-carrier-protein] synthase from Rhodopseudomonas palustris (strain ATCC BAA-98 / CGA009).